Consider the following 397-residue polypeptide: Purine nucleoside transport protein NupG (397 aa).

A run of 11 helical transmembrane segments spans residues 1–21 (MYFL…FLCS), 32–52 (IITL…TKVG), 62–82 (FFTW…PSVM), 97–117 (IIFI…PWLI), 133–153 (LESF…LAVI), 165–185 (LLTF…GSYL), 187–207 (MVPA…ALII), 242–262 (MLVG…YVAL), 282–302 (IFAY…HDAM), 335–355 (VAVA…GMIY), and 377–397 (LLVS…LFVW).

Belongs to the concentrative nucleoside transporter (CNT) (TC 2.A.41) family.

The protein resides in the cell membrane. In terms of biological role, involved in the uptake of the purine ribonucleosides inosine and guanosine. This chain is Purine nucleoside transport protein NupG (nupG), found in Bacillus subtilis (strain 168).